Reading from the N-terminus, the 119-residue chain is Holo-[acyl-carrier-protein] synthase (119 aa).

Mg(2+)-binding residues include aspartate 7 and glutamate 56.

The protein belongs to the P-Pant transferase superfamily. AcpS family. It depends on Mg(2+) as a cofactor.

It localises to the cytoplasm. The enzyme catalyses apo-[ACP] + CoA = holo-[ACP] + adenosine 3',5'-bisphosphate + H(+). In terms of biological role, transfers the 4'-phosphopantetheine moiety from coenzyme A to a Ser of acyl-carrier-protein. The polypeptide is Holo-[acyl-carrier-protein] synthase (Chlamydia trachomatis serovar D (strain ATCC VR-885 / DSM 19411 / UW-3/Cx)).